The chain runs to 198 residues: Large ribosomal subunit protein eL19 (198 aa).

Disordered regions lie at residues 66–85 (YEEARRKGRHTGYGKRRGTA) and 150–177 (KRAKQLADQAQARRDKNKESRKRREERQ). Positions 71-83 (RKGRHTGYGKRRG) are enriched in basic residues. Over residues 160 to 177 (QARRDKNKESRKRREERQ) the composition is skewed to basic and acidic residues.

Belongs to the eukaryotic ribosomal protein eL19 family.

The sequence is that of Large ribosomal subunit protein eL19 (rpl-19) from Caenorhabditis elegans.